The following is a 91-amino-acid chain: Co-chaperonin GroES (91 aa).

Belongs to the GroES chaperonin family. As to quaternary structure, heptamer of 7 subunits arranged in a ring. Interacts with the chaperonin GroEL.

Its subcellular location is the cytoplasm. Its function is as follows. Together with the chaperonin GroEL, plays an essential role in assisting protein folding. The GroEL-GroES system forms a nano-cage that allows encapsulation of the non-native substrate proteins and provides a physical environment optimized to promote and accelerate protein folding. GroES binds to the apical surface of the GroEL ring, thereby capping the opening of the GroEL channel. This Oenococcus oeni (strain ATCC BAA-331 / PSU-1) protein is Co-chaperonin GroES.